We begin with the raw amino-acid sequence, 34 residues long: Potassium channel toxin alpha-KTx 6.17 (34 aa).

Disulfide bonds link Cys3–Cys24, Cys9–Cys29, Cys13–Cys31, and Cys19–Cys34.

This sequence belongs to the short scorpion toxin superfamily. Potassium channel inhibitor family. Alpha-KTx 06 subfamily. In terms of tissue distribution, expressed by the venom gland.

It localises to the secreted. Its function is as follows. This toxin reversibly blocks Shaker B potassium-channels (expressed in insect Sf9 cells) with a Kd of 96.6 nM, and presents an even better affinity toward hKv1.3 (KCNA3), blocking it with a Kd of 17.7 nM. This Opisthacanthus cayaporum (South American scorpion) protein is Potassium channel toxin alpha-KTx 6.17.